The following is a 118-amino-acid chain: Na(+)/H(+) antiporter subunit G1 (118 aa).

3 consecutive transmembrane segments (helical) span residues 9–29 (LAVI…IGII), 47–67 (LGAI…DGYI), and 69–89 (MQLI…SHLI).

Belongs to the CPA3 antiporters (TC 2.A.63) subunit G family. As to quaternary structure, may form a heterooligomeric complex that consists of seven subunits: mnhA1, mnhB1, mnhC1, mnhD1, mnhE1, mnhF1 and mnhG1.

The protein localises to the cell membrane. Functionally, mnh complex is a Na(+)/H(+) antiporter involved in Na(+) excretion. The chain is Na(+)/H(+) antiporter subunit G1 (mnhG1) from Staphylococcus haemolyticus (strain JCSC1435).